A 334-amino-acid chain; its full sequence is Succinate receptor 1 (334 aa).

Topologically, residues 5–31 are extracellular; sequence MAWNATCKNWLAAEAALEKYYLSIFYG. N-linked (GlcNAc...) asparagine glycosylation occurs at Asn8. A helical membrane pass occupies residues 32-52; sequence IEFVVGVLGNTIVVYGYIFSL. Over 53-59 the chain is Cytoplasmic; sequence KNWNSSN. A helical membrane pass occupies residues 60-80; that stretch reads IYLFNLSVSDLAFLCTLPMLI. At 81–103 the chain is on the extracellular side; that stretch reads RSYANGNWIYGDVLCISNRYVLH. Cys95 and Cys172 are oxidised to a cystine. Residues 104-124 traverse the membrane as a helical segment; that stretch reads ANLYTSILFLTFISIDRYLII. The Cytoplasmic portion of the chain corresponds to 125–137; the sequence is KYPFREHLLQKKE. The chain crosses the membrane as a helical span at residues 138 to 158; that stretch reads FAILISLAIWVLVTLELLPIL. Over 159–185 the chain is Extracellular; it reads PLINPVITDNGTTCNDFASSGDPNYNL. Asn168 is a glycosylation site (N-linked (GlcNAc...) asparagine). Residues 186 to 206 form a helical membrane-spanning segment; it reads IYSMCLTLLGFLIPLFVMCFF. Residues 207 to 230 lie on the Cytoplasmic side of the membrane; the sequence is YYKIALFLKQRNRQVATALPLEKP. Residues 231 to 251 traverse the membrane as a helical segment; sequence LNLVIMAVVIFSVLFTPYHVM. Residues 252-281 are Extracellular-facing; the sequence is RNVRIASRLGSWKQYQCTQVVINSFYIVTR. A helical transmembrane segment spans residues 282 to 302; that stretch reads PLAFLNSVINPVFYFLLGDHF. The Cytoplasmic portion of the chain corresponds to 303-334; it reads RDMLMNQLRHNFKSLTSFSRWAHELLLSFREK.

The protein belongs to the G-protein coupled receptor 1 family. Expressed specifically in kidney. Highly expressed in immature dendritic cells, expression rapidly downregulates after maturation. Also expressed in macrophages.

It localises to the cell membrane. G protein-coupled receptor for succinate able to mediate signaling through Gq/GNAQ or Gi/GNAI second messengers depending on the cell type and the processes regulated. Succinate-SUCNR1 signaling serves as a link between metabolic stress, inflammation and energy homeostasis. In macrophages, plays a range of immune-regulatory roles. During inflammation, succinate-SUCNR1 signaling may act as an anti-inflammatory mediator or boost inflammation depending on the inflammatory status of cells. Hyperpolarizes M2 macrophages versus M1 phenotype through Gq signaling by regulating the transcription of genes involved in immune function. In activated M1 macrophages, plays a pro-inflammatory role in response to LPS. Expressed in dendritic cells, where it is involved in the sensing of immunological danger and enhances immunity. Mediates succinate triggered intracelleular calcium mobilization, induces migratory responses and acts in synergy with Toll-like receptor ligands for the production of proinflammatory cytokines as well as an enhancement of antigen-specific activation of helper T cells. In the small intestine, mediates the activation of tuft cells by dietary succinate and triggers type 2 immunity. In adipocytes, plays an important role in the control of energy metabolism. In response to succinate, controls leptin expression in an AMPK-JNK-CEBPA-dependent as well as circadian clock-regulated manner. In muscle tissue, is expressed in non-muscle cells and coordinates muscle remodeling in response to the succinate produced during exercise training in a paracrine manner. In retina, acts as a mediator of vessel growth during retinal development. In response to succinate, regulates the production of angiogenic factors, including VEGF, by retinal ganglion neurons. In Homo sapiens (Human), this protein is Succinate receptor 1.